A 475-amino-acid polypeptide reads, in one-letter code: Ribulose bisphosphate carboxylase large chain (475 aa).

A propeptide spanning residues M1–A2 is cleaved from the precursor. P3 is subject to N-acetylproline. K14 is modified (N6,N6,N6-trimethyllysine). Substrate is bound by residues N123 and T173. K175 functions as the Proton acceptor in the catalytic mechanism. K177 is a binding site for substrate. Mg(2+) is bound by residues K201, D203, and E204. Residue K201 is modified to N6-carboxylysine. Residue H294 is the Proton acceptor of the active site. 3 residues coordinate substrate: R295, H327, and S379.

Belongs to the RuBisCO large chain family. Type I subfamily. Heterohexadecamer of 8 large chains and 8 small chains; disulfide-linked. The disulfide link is formed within the large subunit homodimers. Requires Mg(2+) as cofactor. The disulfide bond which can form in the large chain dimeric partners within the hexadecamer appears to be associated with oxidative stress and protein turnover.

The protein resides in the plastid. Its subcellular location is the chloroplast. It carries out the reaction 2 (2R)-3-phosphoglycerate + 2 H(+) = D-ribulose 1,5-bisphosphate + CO2 + H2O. The catalysed reaction is D-ribulose 1,5-bisphosphate + O2 = 2-phosphoglycolate + (2R)-3-phosphoglycerate + 2 H(+). Its function is as follows. RuBisCO catalyzes two reactions: the carboxylation of D-ribulose 1,5-bisphosphate, the primary event in carbon dioxide fixation, as well as the oxidative fragmentation of the pentose substrate in the photorespiration process. Both reactions occur simultaneously and in competition at the same active site. The chain is Ribulose bisphosphate carboxylase large chain from Tupiella akineta (Green alga).